The primary structure comprises 216 residues: Large ribosomal subunit protein uL4 (216 aa).

The interval 51–78 (KGRSEVHGSNTKPYKQKGTGRARRGDKK) is disordered. Residues 64–76 (YKQKGTGRARRGD) show a composition bias toward basic residues.

It belongs to the universal ribosomal protein uL4 family. Part of the 50S ribosomal subunit.

Functionally, one of the primary rRNA binding proteins, this protein initially binds near the 5'-end of the 23S rRNA. It is important during the early stages of 50S assembly. It makes multiple contacts with different domains of the 23S rRNA in the assembled 50S subunit and ribosome. Its function is as follows. Forms part of the polypeptide exit tunnel. The protein is Large ribosomal subunit protein uL4 of Treponema pallidum (strain Nichols).